Reading from the N-terminus, the 624-residue chain is Kelch-like ECH-associated protein 1 (624 aa).

Position 38 is an S-(2-succinyl)cysteine (Cys38). Residues 77–149 form the BTB domain; it reads CDVTLQVKYE…AYTASISVGE (73 aa). Residue Arg135 forms an N5-[4-(S-L-cysteinyl)-5-methyl-1H-imidazol-2-yl]-L-ornithine (Arg-Cys) (interchain with C-151 in KEAP1) linkage. The residue at position 151 (Cys151) is an S-(2,3-dicarboxypropyl)cysteine; alternate. The residue at position 151 (Cys151) is an S-(2-succinyl)cysteine; alternate. Position 151 is an S-nitrosocysteine; alternate (Cys151). Residue Cys151 forms an N5-[4-(S-L-cysteinyl)-5-methyl-1H-imidazol-2-yl]-L-ornithine (Cys-Arg) (interchain with R-135 in KEAP1) linkage. Residues 184–286 enclose the BACK domain; sequence AIGIANFAEQ…TPRFLQTQLQ (103 aa). Cys241 bears the S-(2-succinyl)cysteine mark. 2 positions are modified to S-(2,3-dicarboxypropyl)cysteine: Cys257 and Cys273. Cys288 is modified (S-(2,3-dicarboxypropyl)cysteine; alternate). Position 288 is an S-(2-succinyl)cysteine; alternate (Cys288). The residue at position 319 (Cys319) is an S-(2-succinyl)cysteine. 6 Kelch repeats span residues 327-372, 373-423, 424-470, 471-517, 519-564, and 565-611; these read LIYT…VVGG, LLYA…VIDG, HIYA…VLNR, LLYA…VLHN, IYAA…VHQG, and KIYV…VTME. The residue at position 434 (Cys434) is an S-cGMP-cysteine. Cys613 carries the post-translational modification S-(2-succinyl)cysteine.

This sequence belongs to the KEAP1 family. Component of the BCR(KEAP1) E3 ubiquitin ligase complex, at least composed of 2 molecules of CUL3, 2 molecules of KEAP1, and RBX1. Interacts with NFE2L2/NRF2; the interaction is direct. Forms a ternary complex with NFE2L2/NRF2 and PGAM5. Interacts with (phosphorylated) SQSTM1/p62; the interaction is direct and inactivates the BCR(KEAP1) complex by sequestering it in inclusion bodies, promoting its degradation. Interacts with NFE2L1. Interacts with BPTF and PTMA. Interacts with MAP1LC3B. Interacts indirectly with ENC1. Interacts with SESN1 and SESN2. Interacts with HSP90AA1 and HSP90AB1. Interacts with PGCKA1; this interaction prevents the ubiquitination of KEAP1 by TRIM25, thus protecting KEAP1 from degradation. Non-enzymatic covalent modifications of reactive cysteines by electrophile metabolites inactivate the BCR(KEAP1) complex. Accumulation of fumarate promotes the formation of cysteine S-succination (S-(2-succinyl)cysteine), leading to inactivate the BCR(KEAP1) complex and promote NFE2L2/NRF2 nuclear accumulation and activation. Nitric oxide-dependent 8-Nitro-cGMP formation promotes cysteine guanylation (S-cGMP-cysteine), leading to NFE2L2/NRF2 nuclear accumulation and activation. Itaconate, an anti-inflammatory metabolite generated in response to lipopolysaccharide, alkylates cysteines, activating NFE2L2/NRF2. Methylglyoxal, a reactive metabolite that accumulates when the glycolytic enzyme PGK1 is inhibited, promotes formation of a methylimidazole cross-link between proximal Cys-151 and Arg-135 on another KEAP1 molecule, resulting in an inactive dimer that inactivates the BCR(KEAP1) complex. In terms of processing, degraded via a proteasomal-independent process during selective autophagy: interaction with phosphorylated SQSTM1/p62 sequesters KEAP1 in inclusion bodies, leading to its degradation. Post-translationally, auto-ubiquitinated by the BCR(KEAP1) complex. Quinone-induced oxidative stress, but not sulforaphane, increases its ubiquitination. Ubiquitination and subsequent degradation is most pronounced following prolonged exposure of cells to oxidative stress, particularly in glutathione-deficient cells that are highly susceptible to oxidative stress. Deubiquitinated by USP25; leading to stabilization. Ubiquitinated by TRIM25; leading to degradation upon ER stress.

It localises to the cytoplasm. It is found in the nucleus. The protein operates within protein modification; protein ubiquitination. With respect to regulation, ubiquitin ligase activity of the BCR(KEAP1) complex is inhibited by oxidative stress and electrophile metabolites such as sulforaphane. Electrophile metabolites react with reactive cysteine residues in KEAP1 and trigger non-enzymatic covalent modifications of these cysteine residues, leading to inactivate the ubiquitin ligase activity of the BCR(KEAP1) complex. Selective autophagy also inactivates the BCR(KEAP1) complex via interaction between KEAP1 and SQSTM1/p62, which sequesters the complex in inclusion bodies and promotes its degradation. Its function is as follows. Substrate-specific adapter of a BCR (BTB-CUL3-RBX1) E3 ubiquitin ligase complex that regulates the response to oxidative stress by targeting NFE2L2/NRF2 for ubiquitination. KEAP1 acts as a key sensor of oxidative and electrophilic stress: in normal conditions, the BCR(KEAP1) complex mediates ubiquitination and degradation of NFE2L2/NRF2, a transcription factor regulating expression of many cytoprotective genes. In response to oxidative stress, different electrophile metabolites trigger non-enzymatic covalent modifications of highly reactive cysteine residues in KEAP1, leading to inactivate the ubiquitin ligase activity of the BCR(KEAP1) complex, promoting NFE2L2/NRF2 nuclear accumulation and expression of phase II detoxifying enzymes. In response to selective autophagy, KEAP1 is sequestered in inclusion bodies following its interaction with SQSTM1/p62, leading to inactivation of the BCR(KEAP1) complex and activation of NFE2L2/NRF2. The BCR(KEAP1) complex also mediates ubiquitination of SQSTM1/p62, increasing SQSTM1/p62 sequestering activity and degradation. The BCR(KEAP1) complex also targets BPTF and PGAM5 for ubiquitination and degradation by the proteasome. The chain is Kelch-like ECH-associated protein 1 from Mus musculus (Mouse).